Reading from the N-terminus, the 331-residue chain is Anthranilate phosphoribosyltransferase (331 aa).

5-phospho-alpha-D-ribose 1-diphosphate is bound by residues G78, 81-82 (GD), T86, 88-91 (NVST), 106-114 (KHGNYSVSS), and S118. G78 serves as a coordination point for anthranilate. S90 is a binding site for Mg(2+). Residue N109 coordinates anthranilate. R164 serves as a coordination point for anthranilate. Mg(2+) is bound by residues D222 and E223.

It belongs to the anthranilate phosphoribosyltransferase family. As to quaternary structure, homodimer. Mg(2+) serves as cofactor.

It carries out the reaction N-(5-phospho-beta-D-ribosyl)anthranilate + diphosphate = 5-phospho-alpha-D-ribose 1-diphosphate + anthranilate. It participates in amino-acid biosynthesis; L-tryptophan biosynthesis; L-tryptophan from chorismate: step 2/5. Functionally, catalyzes the transfer of the phosphoribosyl group of 5-phosphorylribose-1-pyrophosphate (PRPP) to anthranilate to yield N-(5'-phosphoribosyl)-anthranilate (PRA). The sequence is that of Anthranilate phosphoribosyltransferase from Haloferax volcanii (strain ATCC 29605 / DSM 3757 / JCM 8879 / NBRC 14742 / NCIMB 2012 / VKM B-1768 / DS2) (Halobacterium volcanii).